The sequence spans 294 residues: N-acetylmuramic acid 6-phosphate etherase (294 aa).

The SIS domain maps to 54-217 (VIQSFEEEGR…STASMIGVGK (164 aa)). Catalysis depends on glutamate 82, which acts as the Proton donor. Glutamate 113 is a catalytic residue.

Belongs to the GCKR-like family. MurNAc-6-P etherase subfamily. As to quaternary structure, homodimer.

It catalyses the reaction N-acetyl-D-muramate 6-phosphate + H2O = N-acetyl-D-glucosamine 6-phosphate + (R)-lactate. Its pathway is amino-sugar metabolism; N-acetylmuramate degradation. In terms of biological role, specifically catalyzes the cleavage of the D-lactyl ether substituent of MurNAc 6-phosphate, producing GlcNAc 6-phosphate and D-lactate. The protein is N-acetylmuramic acid 6-phosphate etherase of Bacillus cereus (strain ZK / E33L).